The primary structure comprises 370 residues: Ubiquitin carboxyl-terminal hydrolase 12-B (370 aa).

The USP domain occupies 39-369 (FGLVNFGNTC…SGYILFYQSR (331 aa)). Cysteine 48 functions as the Nucleophile in the catalytic mechanism. The tract at residues 145–168 (KQEKQNGRIPNGNIDNENNNNTPD) is disordered. Residues 155 to 165 (NGNIDNENNNN) are compositionally biased toward low complexity. Residues cysteine 186, cysteine 189, cysteine 233, and cysteine 236 each coordinate Zn(2+). Histidine 317 functions as the Proton acceptor in the catalytic mechanism.

Belongs to the peptidase C19 family. USP12/USP46 subfamily. In terms of assembly, interacts with WDR48.

It carries out the reaction Thiol-dependent hydrolysis of ester, thioester, amide, peptide and isopeptide bonds formed by the C-terminal Gly of ubiquitin (a 76-residue protein attached to proteins as an intracellular targeting signal).. In terms of biological role, deubiquitinating enzyme. Has almost no deubiquitinating activity by itself and requires the interaction with wdr48 to have a high activity. The protein is Ubiquitin carboxyl-terminal hydrolase 12-B (usp12-b) of Xenopus laevis (African clawed frog).